The sequence spans 320 residues: ATP-dependent 6-phosphofructokinase (320 aa).

ATP is bound at residue Gly-12. Residue 22-26 (RGVVR) participates in ADP binding. ATP-binding positions include 73–74 (RF) and 103–106 (GDGS). Asp-104 provides a ligand contact to Mg(2+). 126 to 128 (TID) provides a ligand contact to substrate. Catalysis depends on Asp-128, which acts as the Proton acceptor. Arg-155 is a binding site for ADP. Residues Arg-163 and 170–172 (MGR) contribute to the substrate site. Residues 186 to 188 (GCE), Lys-212, and 214 to 216 (KKH) each bind ADP. Substrate-binding positions include Glu-223, Arg-244, and 250 to 253 (HIQR).

This sequence belongs to the phosphofructokinase type A (PFKA) family. ATP-dependent PFK group I subfamily. Prokaryotic clade 'B1' sub-subfamily. As to quaternary structure, homotetramer. Mg(2+) serves as cofactor.

The protein localises to the cytoplasm. It catalyses the reaction beta-D-fructose 6-phosphate + ATP = beta-D-fructose 1,6-bisphosphate + ADP + H(+). It functions in the pathway carbohydrate degradation; glycolysis; D-glyceraldehyde 3-phosphate and glycerone phosphate from D-glucose: step 3/4. Its activity is regulated as follows. Allosterically activated by ADP and other diphosphonucleosides, and allosterically inhibited by phosphoenolpyruvate. Functionally, catalyzes the phosphorylation of D-fructose 6-phosphate to fructose 1,6-bisphosphate by ATP, the first committing step of glycolysis. This Vibrio vulnificus (strain CMCP6) protein is ATP-dependent 6-phosphofructokinase.